The sequence spans 149 residues: ER export of PMA1 protein 1 (149 aa).

The Lumenal portion of the chain corresponds to 1–6 (MNLYGY). Residues 7-27 (FLLLIIVIAFIALLPLFSGIG) traverse the membrane as a helical; Signal-anchor for type II membrane protein segment. Topologically, residues 28–149 (TFKLTKPKSS…KKNEAYEGFV (122 aa)) are cytoplasmic.

In terms of assembly, interacts with PMA1 and PSG1.

The protein resides in the endoplasmic reticulum membrane. Its subcellular location is the cytoplasmic vesicle. It is found in the COPI-coated vesicle membrane. The protein localises to the COPII-coated vesicle membrane. It localises to the golgi apparatus membrane. In terms of biological role, specific cargo receptor protein for the plasma membrane ATPase PMA1 that acts with PSG1 to promote the transport and maturation of PMA1. EXP1 and PSG1 probably act sequentially to promote PMA1 sorting between the ER and the Golgi, with EXP1 promoting PMA1 export from the ER to the Golgi while PSG1 has a role in PMA1 maturation or quality control in the Golgi. In Saccharomyces cerevisiae (strain ATCC 204508 / S288c) (Baker's yeast), this protein is ER export of PMA1 protein 1.